A 353-amino-acid polypeptide reads, in one-letter code: rRNA methyltransferase 1, mitochondrial (353 aa).

The transit peptide at 1–20 (MALLSTVRGATWGRLVTRHF) directs the protein to the mitochondrion. The interval 311–353 (PTEGERRQLLQDPQEPSARSEGLSMAQHPGLSSGPEKERQNEG) is disordered.

This sequence belongs to the class IV-like SAM-binding methyltransferase superfamily. RNA methyltransferase TrmH family.

Its subcellular location is the mitochondrion matrix. The catalysed reaction is guanosine(1145) in 16S rRNA + S-adenosyl-L-methionine = 2'-O-methylguanosine(1145) in 16S rRNA + S-adenosyl-L-homocysteine + H(+). Its function is as follows. S-adenosyl-L-methionine-dependent 2'-O-ribose methyltransferase that catalyzes the formation of 2'-O-methylguanosine at position 1145 (Gm1145) in the 16S mitochondrial large subunit ribosomal RNA (mtLSU rRNA), a universally conserved modification in the peptidyl transferase domain of the mtLSU rRNA. The sequence is that of rRNA methyltransferase 1, mitochondrial from Homo sapiens (Human).